Here is a 428-residue protein sequence, read N- to C-terminus: Dihydroorotase (428 aa).

Positions 59 and 61 each coordinate Zn(2+). Substrate contacts are provided by residues 61 to 63 (HFR) and Asn93. Asp151, His178, and His231 together coordinate Zn(2+). Asn277 is a substrate binding site. Asp304 is a Zn(2+) binding site. The active site involves Asp304. Substrate contacts are provided by residues His308 and 322–323 (FG).

The protein belongs to the metallo-dependent hydrolases superfamily. DHOase family. Class I DHOase subfamily. As to quaternary structure, homodimer. Zn(2+) serves as cofactor.

The catalysed reaction is (S)-dihydroorotate + H2O = N-carbamoyl-L-aspartate + H(+). It functions in the pathway pyrimidine metabolism; UMP biosynthesis via de novo pathway; (S)-dihydroorotate from bicarbonate: step 3/3. Its function is as follows. Catalyzes the reversible cyclization of carbamoyl aspartate to dihydroorotate. This chain is Dihydroorotase, found in Bacillus subtilis (strain 168).